The following is a 320-amino-acid chain: ATP-dependent 6-phosphofructokinase (320 aa).

ATP is bound at residue G12. 22 to 26 (RGVVR) serves as a coordination point for ADP. Residues 73 to 74 (RF) and 103 to 106 (GDGS) contribute to the ATP site. Residue D104 participates in Mg(2+) binding. 126 to 128 (TID) lines the substrate pocket. D128 (proton acceptor) is an active-site residue. Residue R155 coordinates ADP. Residues R163 and 170 to 172 (MGR) contribute to the substrate site. Residues 186–188 (GCE), K212, and 214–216 (KKH) contribute to the ADP site. Substrate contacts are provided by residues E223, R244, and 250 to 253 (HIQR).

It belongs to the phosphofructokinase type A (PFKA) family. ATP-dependent PFK group I subfamily. Prokaryotic clade 'B1' sub-subfamily. As to quaternary structure, homotetramer. Mg(2+) serves as cofactor.

Its subcellular location is the cytoplasm. The enzyme catalyses beta-D-fructose 6-phosphate + ATP = beta-D-fructose 1,6-bisphosphate + ADP + H(+). It participates in carbohydrate degradation; glycolysis; D-glyceraldehyde 3-phosphate and glycerone phosphate from D-glucose: step 3/4. Allosterically activated by ADP and other diphosphonucleosides, and allosterically inhibited by phosphoenolpyruvate. Functionally, catalyzes the phosphorylation of D-fructose 6-phosphate to fructose 1,6-bisphosphate by ATP, the first committing step of glycolysis. The polypeptide is ATP-dependent 6-phosphofructokinase (Blochmanniella floridana).